A 321-amino-acid polypeptide reads, in one-letter code: HYKKRKAQEKGLPEPTVTNEEYVEELKKGILDMGIKLLFSKVKSLLKKLKNKIFPKKKEDNQAVDTKSMEEPKVKAQPALRGVEPTEDSNIMNSINNVMDEIDFFEKELIENNNTPNVVPPTQSKKKNKNETVSGMDENFDNHPENYFKEEYYYDENDDMEVKVKKIGVTLKKFEPLKNGNVSETIKLIHLGNKDKKHIEAINNDIQIIKQELQAIYNELMNYTNGNKNIQQIFQQNILENDVLNQETEEEMEKQVEAITKQIEAEVDALAPKNKEEEEKEKEKEKEKEEKEKEEKEKEKEEKEKEEKEKEEKEEKEEEKK.

Residues 58 to 74 are compositionally biased toward basic and acidic residues; that stretch reads KEDNQAVDTKSMEEPKV. 3 disordered regions span residues 58–88, 113–141, and 263–321; these read KEDN…PTED, NNTP…ENFD, and IEAE…EEKK. Low complexity predominate over residues 113-122; sequence NNTPNVVPPT. A compositionally biased stretch (basic and acidic residues) spans 273–321; it reads KNKEEEEKEKEKEKEKEEKEKEEKEKEKEEKEKEEKEKEEKEEKEEEKK.

This sequence belongs to the plasmodium ABRA family. Forms a complex composed of MSP1, MSP6, MSP7, MSP9 and MSP3; within the complex, MSP6 and MSP9 mediate the binding to the host erythrocyte. Interacts with MSP1 subunits p19 and p42; the interaction is direct. Interacts with host SLC4A1/Band 3 protein (via the 5ABC region). MSP1 subunits p19 or p42, and MSP9 form a co-ligand complex that interacts with host SLC4A1/Band 3 protein. In terms of processing, not glycosylated.

Its subcellular location is the cell membrane. It localises to the parasitophorous vacuole lumen. The protein resides in the secreted. Its function is as follows. During the asexual blood stage, involved in the sialic acid-independent (SAID) merozoite invasion of host erythrocytes by binding to host SLC4A1/Band 3 protein on the surface of the host erythrocyte. This is Merozoite surface protein 9 from Plasmodium falciparum (isolate FC27 / Papua New Guinea).